Reading from the N-terminus, the 65-residue chain is Large ribosomal subunit protein bL33c (65 aa).

Belongs to the bacterial ribosomal protein bL33 family.

The protein resides in the plastid. In Aneura mirabilis (Parasitic liverwort), this protein is Large ribosomal subunit protein bL33c.